Consider the following 32-residue polypeptide: Coenzyme PQQ synthesis protein A (32 aa).

Residues 16-20 constitute a cross-link (pyrroloquinoline quinone (Glu-Tyr)); that stretch reads EINMY.

Belongs to the PqqA family.

Its pathway is cofactor biosynthesis; pyrroloquinoline quinone biosynthesis. In terms of biological role, required for coenzyme pyrroloquinoline quinone (PQQ) biosynthesis. PQQ is probably formed by cross-linking a specific glutamate to a specific tyrosine residue and excising these residues from the peptide. The sequence is that of Coenzyme PQQ synthesis protein A from Dinoroseobacter shibae (strain DSM 16493 / NCIMB 14021 / DFL 12).